The sequence spans 539 residues: Sorting nexin-27 (539 aa).

A disordered region spans residues 1 to 40; sequence MADEDGEGIHPSAPHRNGGGGGGSGLHCAGNGGGGGGGPR. The span at 17–39 shows a compositional bias: gly residues; the sequence is NGGGGGGSGLHCAGNGGGGGGGP. The PDZ domain occupies 41–134; that stretch reads VVRIVKSESG…ELILTVLSVP (94 aa). A phosphoserine mark is found at Ser49 and Ser60. Residues 159 to 267 enclose the PX domain; sequence QAVPISVPTY…EFLSESDENY (109 aa). Residues 271-360 enclose the Ras-associating domain; sequence SDVELRVALP…TCLTIRKWLF (90 aa). Residues 271-360 form an FERM-like region F1 region; the sequence is SDVELRVALP…TCLTIRKWLF (90 aa). An FERM-like region F2 region spans residues 371–419; it reads NDLAVTYFFHQAVDDVKKGYIKAEEKSYQLQKLHEQRKMVMYLNMLRTC. An FERM-like region F3 region spans residues 423-523; the sequence is NEIIFPHCAC…RVFCELKWRK (101 aa).

As to quaternary structure, core component of the SNX27-retromer, a multiprotein complex composed of SNX27, the WASH complex and the retromer complex. Interacts (via the FERM-like regions) with the WASH complex. Interacts with SNX1. Interacts with CYTIP. Interacts with DGKZ. Interacts with MCC. Interacts (via PDZ domain) with a number of target transmembrane proteins (via PDZ-binding motif): ABCC4, ADRB2, ARHGEF7, GRIA1, GRIA2, GRIN1, GRIN2A GRIN2C, KCNJ6, KCNJ9 and SLC2A1/GLUT1. Interacts (via PDZ domains) with SLC9A3; directs SLC9A3 membrane insertion from early endosomes to the plasma membrane. Expressed in cells of hematopoietic origin.

Its subcellular location is the early endosome membrane. It localises to the cytoplasm. The protein localises to the cytosol. In terms of biological role, involved in the retrograde transport from endosome to plasma membrane, a trafficking pathway that promotes the recycling of internalized transmembrane proteins. Following internalization, endocytosed transmembrane proteins are delivered to early endosomes and recycled to the plasma membrane instead of being degraded in lysosomes. SNX27 specifically binds and directs sorting of a subset of transmembrane proteins containing a PDZ-binding motif at the C-terminus: following interaction with target transmembrane proteins, associates with the retromer complex, preventing entry into the lysosomal pathway, and promotes retromer-tubule based plasma membrane recycling. SNX27 also binds with the WASH complex. Interacts with membranes containing phosphatidylinositol-3-phosphate (PtdIns(3P)). May participate in establishment of natural killer cell polarity. Recruits CYTIP to early endosomes. This is Sorting nexin-27 (Snx27) from Mus musculus (Mouse).